The sequence spans 556 residues: Formate--tetrahydrofolate ligase (556 aa).

Residue 65–72 participates in ATP binding; that stretch reads TPAGEGKT.

It belongs to the formate--tetrahydrofolate ligase family.

The enzyme catalyses (6S)-5,6,7,8-tetrahydrofolate + formate + ATP = (6R)-10-formyltetrahydrofolate + ADP + phosphate. The protein operates within one-carbon metabolism; tetrahydrofolate interconversion. This Clostridium acidurici (Gottschalkia acidurici) protein is Formate--tetrahydrofolate ligase.